The following is a 99-amino-acid chain: DNA-directed RNA polymerase subunit omega (99 aa).

This sequence belongs to the RNA polymerase subunit omega family. The RNAP catalytic core consists of 2 alpha, 1 beta, 1 beta' and 1 omega subunit. When a sigma factor is associated with the core the holoenzyme is formed, which can initiate transcription.

The enzyme catalyses RNA(n) + a ribonucleoside 5'-triphosphate = RNA(n+1) + diphosphate. Its function is as follows. Promotes RNA polymerase assembly. Latches the N- and C-terminal regions of the beta' subunit thereby facilitating its interaction with the beta and alpha subunits. The polypeptide is DNA-directed RNA polymerase subunit omega (rpoZ) (Deinococcus radiodurans (strain ATCC 13939 / DSM 20539 / JCM 16871 / CCUG 27074 / LMG 4051 / NBRC 15346 / NCIMB 9279 / VKM B-1422 / R1)).